Consider the following 597-residue polypeptide: Period protein homolog lin-42 (597 aa).

The disordered stretch occupies residues 1 to 44 (MEPAGHSSATHNIVVPNANPTQPQPLAPAMREEGATLSPPNTWS). Residues 155 to 223 (LQASHVSSNF…VRQAHIDLHN (69 aa)) enclose the PAS domain. Disordered stretches follow at residues 313–335 (PVPS…QNQG), 418–450 (KSQS…EALT), 473–509 (DDVP…PPPG), and 555–597 (DGLL…DSQN). The segment covering 425 to 438 (SPAKQDEPFDEKKY) has biased composition (basic and acidic residues). Polar residues predominate over residues 487 to 497 (IHWTSSSQNHY). A compositionally biased stretch (low complexity) spans 561-577 (GATSTGGASPTSGTNSP).

It localises to the nucleus. Its subcellular location is the cytoplasm. In terms of biological role, transcriptional repressor which interacts with the promoter region of target genes. Has a specific role in developmental timing where it regulates temporal expression of a number of miRNAs and mRNAs. Controls temporal cell fate transition during embryonic and early larval development by restricting the expression of specific miRNAs, including let-7, miR-48, lin-4, miR-35 and miR-58. Restricts the accumulation of lin-29 in the hypodermis to the larval L4 stage, thus controlling terminal differentiation of seam cells. Has a role in the miRNA-mediated specification of asymmetric gene expression patterns in gustatory neurons. May also regulate genes involved in other biological processes including transport, small molecule metabolism, and growth. Inhibits dauer formation, by antagonizing daf-12. Specifically required for maintaining the timing of larval development and molting cycle rhythms. In Caenorhabditis elegans, this protein is Period protein homolog lin-42.